We begin with the raw amino-acid sequence, 496 residues long: WD repeat-containing protein 37 (496 aa).

2 stretches are compositionally biased toward polar residues: residues methionine 1 to glutamine 13 and serine 22 to serine 31. Residues methionine 1 to leucine 50 are disordered. A compositionally biased stretch (basic and acidic residues) spans glutamate 32–aspartate 47. 2 WD repeats span residues glycine 154–lysine 194 and glycine 197–glutamine 236. A disordered region spans residues valine 238–serine 267. Over residues glycine 247–valine 265 the composition is skewed to acidic residues. 5 WD repeats span residues serine 281–serine 320, glycine 323–valine 362, glycine 367–alanine 405, arginine 408–leucine 447, and glycine 454–glutamate 495.

In terms of assembly, forms homodimers. Interacts with PACS1. Interacts with PACS2.

Its subcellular location is the cytoplasm. It is found in the nucleus. Functionally, required for normal ER Ca2+ handling in lymphocytes. Together with PACS1, it plays an essential role in stabilizing peripheral lymphocyte populations. This is WD repeat-containing protein 37 (Wdr37) from Mus musculus (Mouse).